A 243-amino-acid polypeptide reads, in one-letter code: 4-hydroxy-tetrahydrodipicolinate reductase (243 aa).

NAD(+) is bound by residues 9 to 14 (GANGKM), 78 to 80 (GTS), and 104 to 107 (APNF). Histidine 134 (proton donor/acceptor) is an active-site residue. Histidine 135 is a binding site for (S)-2,3,4,5-tetrahydrodipicolinate. The active-site Proton donor is lysine 138. 144–145 (GT) provides a ligand contact to (S)-2,3,4,5-tetrahydrodipicolinate.

This sequence belongs to the DapB family.

Its subcellular location is the cytoplasm. The enzyme catalyses (S)-2,3,4,5-tetrahydrodipicolinate + NAD(+) + H2O = (2S,4S)-4-hydroxy-2,3,4,5-tetrahydrodipicolinate + NADH + H(+). It catalyses the reaction (S)-2,3,4,5-tetrahydrodipicolinate + NADP(+) + H2O = (2S,4S)-4-hydroxy-2,3,4,5-tetrahydrodipicolinate + NADPH + H(+). Its pathway is amino-acid biosynthesis; L-lysine biosynthesis via DAP pathway; (S)-tetrahydrodipicolinate from L-aspartate: step 4/4. Its function is as follows. Catalyzes the conversion of 4-hydroxy-tetrahydrodipicolinate (HTPA) to tetrahydrodipicolinate. This chain is 4-hydroxy-tetrahydrodipicolinate reductase, found in Legionella pneumophila (strain Lens).